Consider the following 312-residue polypeptide: Flavonol 3-sulfotransferase (312 aa).

Residue 59 to 64 (KSGTTW) coordinates 3'-phosphoadenylyl sulfate. Catalysis depends on His-119, which acts as the Proton acceptor. 3'-phosphoadenylyl sulfate-binding positions include Arg-141, Ser-149, Tyr-207, and 277-279 (RKG).

The protein belongs to the sulfotransferase 1 family. In terms of tissue distribution, highest in shoot tips and lowest in mature leaves and roots.

The protein localises to the cytoplasm. Functionally, sulfotransferase that utilizes 3'-phospho-5'-adenylyl sulfate (PAPS) as sulfonate donor to catalyze the sulfate conjugation of quercetin, rhamnetin and isorhamnetin but not kaempferol. O-sulfation of position 3 of flavonol. May play a role in auxin transport. This Flaveria bidentis (Coastal plain yellowtops) protein is Flavonol 3-sulfotransferase.